We begin with the raw amino-acid sequence, 356 residues long: Galectin-9C (356 aa).

The 132-residue stretch at 17–148 (FSGTIQGGLQ…SVQLSYISFQ (132 aa)) folds into the Galectin 1 domain. 82–88 (WGPEERK) contacts a beta-D-galactoside. Residues 170–190 (FPPRPRGRRQKPPSVRPANPA) form a disordered region. The Galectin 2 domain occupies 228–356 (FITTIPGGLY…GDIQLTHVQT (129 aa)). 288–294 (WGSEERS) provides a ligand contact to a beta-D-galactoside.

In terms of biological role, binds galactosides. The polypeptide is Galectin-9C (LGALS9C) (Homo sapiens (Human)).